Reading from the N-terminus, the 873-residue chain is Probable beta-glucosidase A (873 aa).

Positions 1–19 (MRFGWLEVAALTAASVANA) are cleaved as a signal peptide. Asn-71, Asn-222, and Asn-263 each carry an N-linked (GlcNAc...) asparagine glycan. Asp-291 is an active-site residue. 9 N-linked (GlcNAc...) asparagine glycosylation sites follow: Asn-326, Asn-333, Asn-365, Asn-453, Asn-534, Asn-553, Asn-575, Asn-679, and Asn-725. The segment at 731–764 (DSSDDPNYGWEDSEYIPEGARDGSPQPLLKAGGA) is disordered.

It belongs to the glycosyl hydrolase 3 family.

It is found in the secreted. The enzyme catalyses Hydrolysis of terminal, non-reducing beta-D-glucosyl residues with release of beta-D-glucose.. It participates in glycan metabolism; cellulose degradation. Beta-glucosidases are one of a number of cellulolytic enzymes involved in the degradation of cellulosic biomass. Catalyzes the last step releasing glucose from the inhibitory cellobiose. The sequence is that of Probable beta-glucosidase A (bglA) from Aspergillus fumigatus (strain CBS 144.89 / FGSC A1163 / CEA10) (Neosartorya fumigata).